We begin with the raw amino-acid sequence, 358 residues long: Homoserine O-acetyltransferase (358 aa).

The region spanning 41-343 is the AB hydrolase-1 domain; it reads NAVLICHALT…DYGHDAFLVD (303 aa). The active-site Nucleophile is serine 143. Arginine 212 is a binding site for substrate. Residues aspartate 304 and histidine 337 contribute to the active site. Substrate is bound at residue aspartate 338.

This sequence belongs to the AB hydrolase superfamily. MetX family. In terms of assembly, homodimer.

The protein resides in the cytoplasm. It carries out the reaction L-homoserine + acetyl-CoA = O-acetyl-L-homoserine + CoA. It functions in the pathway amino-acid biosynthesis; L-methionine biosynthesis via de novo pathway; O-acetyl-L-homoserine from L-homoserine: step 1/1. Its function is as follows. Transfers an acetyl group from acetyl-CoA to L-homoserine, forming acetyl-L-homoserine. The sequence is that of Homoserine O-acetyltransferase from Haemophilus influenzae (strain 86-028NP).